A 189-amino-acid chain; its full sequence is CASP-like protein 1U2 (189 aa).

The Cytoplasmic segment spans residues 1–24 (MFGSDDSGCHVMDDDVAPPANGSK). Residues 25 to 45 (AVTLLLRLITLALALTSAVLM) form a helical membrane-spanning segment. Topologically, residues 46 to 71 (ATASECTIYGLDGATATTVTFKDYQP) are extracellular. Residues 72–92 (FIYLVGSNIAATILEVAAIYV) form a helical membrane-spanning segment. Residues 93–109 (QVGKGDDVEDAPMIPRV) are Cytoplasmic-facing. Residues 110 to 130 (VLVVVDVAVQMLLYSATGAVF) form a helical membrane-spanning segment. Residues 131–158 (AAVMAYGPQISACTGAAGHFCEQVQRSK) lie on the Extracellular side of the membrane. Residues 159-179 (IISLAASLSAVLAAVAKDVAL) form a helical membrane-spanning segment. Over 180-189 (PCSVWPHPSS) the chain is Cytoplasmic.

The protein belongs to the Casparian strip membrane proteins (CASP) family. As to quaternary structure, homodimer and heterodimers.

The protein resides in the cell membrane. In Sorghum bicolor (Sorghum), this protein is CASP-like protein 1U2.